The sequence spans 319 residues: Phospho-N-acetylmuramoyl-pentapeptide-transferase (319 aa).

Helical transmembrane passes span 5–25 (LIPF…FIGF), 51–71 (TMGG…VLIW), 79–99 (AWIL…DDGI), 116–136 (LGQI…HFAF), 149–169 (SFLF…AVNL), 172–192 (GLDG…AWIA), 197–217 (NWVI…FFIF), 224–244 (IFMG…VSIF), 252–272 (LLIG…VISF), and 299–319 (VDIV…IIWG).

This sequence belongs to the glycosyltransferase 4 family. MraY subfamily. It depends on Mg(2+) as a cofactor.

The protein resides in the cell membrane. The catalysed reaction is UDP-N-acetyl-alpha-D-muramoyl-L-alanyl-gamma-D-glutamyl-L-lysyl-D-alanyl-D-alanine + di-trans,octa-cis-undecaprenyl phosphate = Mur2Ac(oyl-L-Ala-gamma-D-Glu-L-Lys-D-Ala-D-Ala)-di-trans,octa-cis-undecaprenyl diphosphate + UMP. It functions in the pathway cell wall biogenesis; peptidoglycan biosynthesis. Its function is as follows. Catalyzes the initial step of the lipid cycle reactions in the biosynthesis of the cell wall peptidoglycan: transfers peptidoglycan precursor phospho-MurNAc-pentapeptide from UDP-MurNAc-pentapeptide onto the lipid carrier undecaprenyl phosphate, yielding undecaprenyl-pyrophosphoryl-MurNAc-pentapeptide, known as lipid I. This is Phospho-N-acetylmuramoyl-pentapeptide-transferase from Lactobacillus johnsonii (strain CNCM I-12250 / La1 / NCC 533).